A 691-amino-acid chain; its full sequence is Protein 4.2 (691 aa).

Glycine 2 carries the N-myristoyl glycine lipid modification. The segment at 31–39 is band 3 binding; it reads LTLRRGQSF. Position 248 is a phosphoserine (serine 248). Tyrosine 570 is modified (phosphotyrosine).

It belongs to the transglutaminase superfamily. Transglutaminase family. Component of the ankyrin-1 complex in the erythrocyte, composed of ANK1, RHCE, RHAG, SLC4A1, EPB42, GYPA, GYPB and AQP1. Interacts with SLC4A1 (via the cytoplasmic domain); this interaction is mediated by the SLC4A1 Band 3-I dimer. Interacts with ANK1 (via ANK 1-13 repeats). Interacts with AQP1 (via the C-terminal).

The protein resides in the cell membrane. The protein localises to the cytoplasm. It is found in the cytoskeleton. Functionally, component of the ankyrin-1 complex, a multiprotein complex involved in the stability and shape of the erythrocyte membrane. The polypeptide is Protein 4.2 (Mus musculus (Mouse)).